Consider the following 383-residue polypeptide: Chorismate synthase (383 aa).

Residues Arg39 and Arg45 each contribute to the NADP(+) site. FMN-binding positions include 128–130 (RAS), Gly291, 306–310 (KPIAT), and Arg332.

Belongs to the chorismate synthase family. In terms of assembly, homotetramer. FMNH2 is required as a cofactor.

It catalyses the reaction 5-O-(1-carboxyvinyl)-3-phosphoshikimate = chorismate + phosphate. Its pathway is metabolic intermediate biosynthesis; chorismate biosynthesis; chorismate from D-erythrose 4-phosphate and phosphoenolpyruvate: step 7/7. Its function is as follows. Catalyzes the anti-1,4-elimination of the C-3 phosphate and the C-6 proR hydrogen from 5-enolpyruvylshikimate-3-phosphate (EPSP) to yield chorismate, which is the branch point compound that serves as the starting substrate for the three terminal pathways of aromatic amino acid biosynthesis. This reaction introduces a second double bond into the aromatic ring system. The polypeptide is Chorismate synthase (Thermus thermophilus (strain ATCC 27634 / DSM 579 / HB8)).